Here is an 824-residue protein sequence, read N- to C-terminus: Glycogen phosphorylase (824 aa).

The residue at position 667 (lysine 667) is an N6-(pyridoxal phosphate)lysine.

It belongs to the glycogen phosphorylase family. Pyridoxal 5'-phosphate serves as cofactor.

The catalysed reaction is [(1-&gt;4)-alpha-D-glucosyl](n) + phosphate = [(1-&gt;4)-alpha-D-glucosyl](n-1) + alpha-D-glucose 1-phosphate. Functionally, phosphorylase is an important allosteric enzyme in carbohydrate metabolism. Enzymes from different sources differ in their regulatory mechanisms and in their natural substrates. However, all known phosphorylases share catalytic and structural properties. The sequence is that of Glycogen phosphorylase (glgP) from Chlamydia pneumoniae (Chlamydophila pneumoniae).